Reading from the N-terminus, the 91-residue chain is Probable Fe(2+)-trafficking protein (91 aa).

Belongs to the Fe(2+)-trafficking protein family.

Functionally, could be a mediator in iron transactions between iron acquisition and iron-requiring processes, such as synthesis and/or repair of Fe-S clusters in biosynthetic enzymes. This is Probable Fe(2+)-trafficking protein from Ralstonia pickettii (strain 12J).